The chain runs to 694 residues: Polyphosphate kinase (694 aa).

An ATP-binding site is contributed by N45. 2 residues coordinate Mg(2+): R367 and R397. The active-site Phosphohistidine intermediate is the H427. The ATP site is built by Y460, R553, and H580.

Belongs to the polyphosphate kinase 1 (PPK1) family. The cofactor is Mg(2+). An intermediate of this reaction is the autophosphorylated ppk in which a phosphate is covalently linked to a histidine residue through a N-P bond.

The catalysed reaction is [phosphate](n) + ATP = [phosphate](n+1) + ADP. Functionally, catalyzes the reversible transfer of the terminal phosphate of ATP to form a long-chain polyphosphate (polyP). The polypeptide is Polyphosphate kinase (Campylobacter jejuni subsp. doylei (strain ATCC BAA-1458 / RM4099 / 269.97)).